A 232-amino-acid polypeptide reads, in one-letter code: 5'-methylthioadenosine/S-adenosylhomocysteine nucleosidase (232 aa).

Glutamate 12 (proton acceptor) is an active-site residue. Residues glycine 78, isoleucine 152, and 173-174 (ME) each bind substrate. Residue aspartate 197 is the Proton donor of the active site.

It belongs to the PNP/UDP phosphorylase family. MtnN subfamily. As to quaternary structure, homodimer.

The enzyme catalyses S-adenosyl-L-homocysteine + H2O = S-(5-deoxy-D-ribos-5-yl)-L-homocysteine + adenine. It catalyses the reaction S-methyl-5'-thioadenosine + H2O = 5-(methylsulfanyl)-D-ribose + adenine. It carries out the reaction 5'-deoxyadenosine + H2O = 5-deoxy-D-ribose + adenine. It participates in amino-acid biosynthesis; L-methionine biosynthesis via salvage pathway; S-methyl-5-thio-alpha-D-ribose 1-phosphate from S-methyl-5'-thioadenosine (hydrolase route): step 1/2. Its function is as follows. Catalyzes the irreversible cleavage of the glycosidic bond in both 5'-methylthioadenosine (MTA) and S-adenosylhomocysteine (SAH/AdoHcy) to adenine and the corresponding thioribose, 5'-methylthioribose and S-ribosylhomocysteine, respectively. Also cleaves 5'-deoxyadenosine, a toxic by-product of radical S-adenosylmethionine (SAM) enzymes, into 5-deoxyribose and adenine. Thus, is required for in vivo function of the radical SAM enzymes biotin synthase and lipoic acid synthase, that are inhibited by 5'-deoxyadenosine accumulation. In Salmonella paratyphi B (strain ATCC BAA-1250 / SPB7), this protein is 5'-methylthioadenosine/S-adenosylhomocysteine nucleosidase.